A 92-amino-acid chain; its full sequence is Small ribosomal subunit protein uS19c (92 aa).

This sequence belongs to the universal ribosomal protein uS19 family.

It is found in the plastid. The protein resides in the chloroplast. Functionally, protein S19 forms a complex with S13 that binds strongly to the 16S ribosomal RNA. This chain is Small ribosomal subunit protein uS19c, found in Spirogyra maxima (Green alga).